We begin with the raw amino-acid sequence, 441 residues long: uncharacterized protein (441 aa).

The N-terminal stretch at methionine 1–glycine 23 is a signal peptide. Cysteine 24 carries the post-translational modification N-acetylcysteine. The S-archaeol cysteine moiety is linked to residue cysteine 24.

It belongs to the bacterial solute-binding protein 1 family.

The protein localises to the cell membrane. Probably part of a binding-protein-dependent transport system PH1214/15/16. This is an uncharacterized protein from Pyrococcus horikoshii (strain ATCC 700860 / DSM 12428 / JCM 9974 / NBRC 100139 / OT-3).